A 454-amino-acid chain; its full sequence is Bifunctional protein GlmU (454 aa).

Residues 1–229 (MQRYAVVLAA…FDEIMGVNDR (229 aa)) form a pyrophosphorylase region. UDP-N-acetyl-alpha-D-glucosamine contacts are provided by residues 8 to 11 (LAAG), Lys22, Gln72, and 77 to 78 (GT). Asp102 contacts Mg(2+). UDP-N-acetyl-alpha-D-glucosamine-binding residues include Gly139, Glu154, and Asn227. Position 227 (Asn227) interacts with Mg(2+). Positions 230–250 (VALSKAEQAMRQRINEYHMRN) are linker. An N-acetyltransferase region spans residues 251–454 (GVTLIDPSST…KPGYLNKNKE (204 aa)). UDP-N-acetyl-alpha-D-glucosamine contacts are provided by Arg332 and Lys350. Residue His362 is the Proton acceptor of the active site. Positions 365 and 376 each coordinate UDP-N-acetyl-alpha-D-glucosamine. Acetyl-CoA is bound by residues 385 to 386 (NY), Ala422, and Arg439.

In the N-terminal section; belongs to the N-acetylglucosamine-1-phosphate uridyltransferase family. It in the C-terminal section; belongs to the transferase hexapeptide repeat family. As to quaternary structure, homotrimer. Requires Mg(2+) as cofactor.

It is found in the cytoplasm. It carries out the reaction alpha-D-glucosamine 1-phosphate + acetyl-CoA = N-acetyl-alpha-D-glucosamine 1-phosphate + CoA + H(+). It catalyses the reaction N-acetyl-alpha-D-glucosamine 1-phosphate + UTP + H(+) = UDP-N-acetyl-alpha-D-glucosamine + diphosphate. Its pathway is nucleotide-sugar biosynthesis; UDP-N-acetyl-alpha-D-glucosamine biosynthesis; N-acetyl-alpha-D-glucosamine 1-phosphate from alpha-D-glucosamine 6-phosphate (route II): step 2/2. It participates in nucleotide-sugar biosynthesis; UDP-N-acetyl-alpha-D-glucosamine biosynthesis; UDP-N-acetyl-alpha-D-glucosamine from N-acetyl-alpha-D-glucosamine 1-phosphate: step 1/1. It functions in the pathway bacterial outer membrane biogenesis; LPS lipid A biosynthesis. Functionally, catalyzes the last two sequential reactions in the de novo biosynthetic pathway for UDP-N-acetylglucosamine (UDP-GlcNAc). The C-terminal domain catalyzes the transfer of acetyl group from acetyl coenzyme A to glucosamine-1-phosphate (GlcN-1-P) to produce N-acetylglucosamine-1-phosphate (GlcNAc-1-P), which is converted into UDP-GlcNAc by the transfer of uridine 5-monophosphate (from uridine 5-triphosphate), a reaction catalyzed by the N-terminal domain. This chain is Bifunctional protein GlmU, found in Staphylococcus carnosus (strain TM300).